A 339-amino-acid chain; its full sequence is DNA double-strand break repair nuclease NurA (339 aa).

Mn(2+) contacts are provided by Asp58 and Asp133.

The protein belongs to the NurA family. Homodimer. Forms a complex with HerA. It depends on Mn(2+) as a cofactor.

With respect to regulation, nuclease activity requires the presence of HerA. Another report shows endo- and exonuclease activity in the absence of HerA; HerA stimulates the exo- but not endonuclease. LhrC-Core (Hel112) inhibits the exonuclease activity of the HerA-NurA complex on ss- and dsDNA, has no effect on the nicking activity of NurA. Endo- and exonuclease activities are inhibited by ATP; ATP may subtract divalent ions from the reaction preventing nuclease activity, HerA can alleviate ATP inhibition. In terms of biological role, involved in DNA double-strand break (DSB) repair. Probably acts with HerA to stimulate resection of the 5' strand and produce the long 3' single-strand that is required for RadA loading. NurA and HerA together stimulate the end-resection of six nucleotides of a linear DNA substrate. Processes linear double-stranded (ds)DNA probes with 3' or 5' single-stranded overhangs or blunt ends. Has endonuclease activity on single-stranded (ss)DNA and nicking activity on dsDNA without HerA as well as 5'- and 3'-exonuclease activity on ssDNA. Binds ssDNA, dsDNA, forked and bubble DNA equally well. The polypeptide is DNA double-strand break repair nuclease NurA (Saccharolobus solfataricus (strain ATCC 35092 / DSM 1617 / JCM 11322 / P2) (Sulfolobus solfataricus)).